Here is a 352-residue protein sequence, read N- to C-terminus: Photosystem II D2 protein (352 aa).

A helical membrane pass occupies residues Cys-40 to Thr-60. Residue His-117 participates in chlorophyll a binding. Residues Gly-124 to Pro-140 form a helical membrane-spanning segment. Gln-129 and Asn-142 together coordinate pheophytin a. The chain crosses the membrane as a helical span at residues Val-152–Ala-165. His-197 contacts chlorophyll a. The helical transmembrane segment at Ala-207–Asp-227 threads the bilayer. Positions 214 and 261 each coordinate a plastoquinone. His-214 contacts Fe cation. Residue His-268 participates in Fe cation binding. A helical transmembrane segment spans residues Gly-278–Arg-294.

Belongs to the reaction center PufL/M/PsbA/D family. As to quaternary structure, PSII is composed of 1 copy each of membrane proteins PsbA, PsbB, PsbC, PsbD, PsbE, PsbF, PsbH, PsbI, PsbJ, PsbK, PsbL, PsbM, PsbT, PsbX, PsbY, PsbZ, Psb30/Ycf12, at least 3 peripheral proteins of the oxygen-evolving complex and a large number of cofactors. It forms dimeric complexes. The cofactor is The D1/D2 heterodimer binds P680, chlorophylls that are the primary electron donor of PSII, and subsequent electron acceptors. It shares a non-heme iron and each subunit binds pheophytin, quinone, additional chlorophylls, carotenoids and lipids. There is also a Cl(-1) ion associated with D1 and D2, which is required for oxygen evolution. The PSII complex binds additional chlorophylls, carotenoids and specific lipids..

The protein localises to the plastid. The protein resides in the cyanelle thylakoid membrane. It carries out the reaction 2 a plastoquinone + 4 hnu + 2 H2O = 2 a plastoquinol + O2. In terms of biological role, photosystem II (PSII) is a light-driven water:plastoquinone oxidoreductase that uses light energy to abstract electrons from H(2)O, generating O(2) and a proton gradient subsequently used for ATP formation. It consists of a core antenna complex that captures photons, and an electron transfer chain that converts photonic excitation into a charge separation. The D1/D2 (PsbA/PsbD) reaction center heterodimer binds P680, the primary electron donor of PSII as well as several subsequent electron acceptors. D2 is needed for assembly of a stable PSII complex. This Cyanophora paradoxa protein is Photosystem II D2 protein.